The following is a 191-amino-acid chain: Small ribosomal subunit protein uS4A (191 aa).

A phosphoserine mark is found at Ser50 and Ser161. Residues 107 to 181 (RRLQTQVFKL…CKRKRLRSQE (75 aa)) form the S4 RNA-binding domain. Position 164 is a phosphotyrosine (Tyr164). Residues 166 to 191 (GGRPGRCKRKRLRSQEGGEGEEAEEE) form a disordered region. Ser179 carries the post-translational modification Phosphoserine.

It belongs to the universal ribosomal protein uS4 family. In terms of assembly, component of the small ribosomal subunit (SSU). Mature yeast ribosomes consist of a small (40S) and a large (60S) subunit. The 40S small subunit contains 1 molecule of ribosomal RNA (18S rRNA) and at least 33 different proteins. The large 60S subunit contains 3 rRNA molecules (25S, 5.8S and 5S rRNA) and at least 46 different proteins. Interacts with snoRNA U3. uS11 interacts with MPP10. Component of the ribosomal small subunit (SSU) processome composed of at least 40 protein subunits and snoRNA U3.

The protein resides in the cytoplasm. Component of the ribosome, a large ribonucleoprotein complex responsible for the synthesis of proteins in the cell. The small ribosomal subunit (SSU) binds messenger RNAs (mRNAs) and translates the encoded message by selecting cognate aminoacyl-transfer RNA (tRNA) molecules. The large subunit (LSU) contains the ribosomal catalytic site termed the peptidyl transferase center (PTC), which catalyzes the formation of peptide bonds, thereby polymerizing the amino acids delivered by tRNAs into a polypeptide chain. The nascent polypeptides leave the ribosome through a tunnel in the LSU and interact with protein factors that function in enzymatic processing, targeting, and the membrane insertion of nascent chains at the exit of the ribosomal tunnel. uS4 is involved in nucleolar processing of pre-18S ribosomal RNA and ribosome assembly. This Schizosaccharomyces pombe (strain 972 / ATCC 24843) (Fission yeast) protein is Small ribosomal subunit protein uS4A (rps901).